Consider the following 565-residue polypeptide: uncharacterized protein (565 aa).

5 helical membrane passes run 4 to 26 (FVQF…AVWV), 33 to 55 (GYGL…VGAA), 68 to 90 (SLLY…VNAL), 97 to 119 (YAIL…TQFF), and 162 to 184 (ISAM…IILL). RCK C-terminal domains follow at residues 210-295 (PNVD…LGPE) and 296-379 (VPDA…IFGV). The next 5 membrane-spanning stretches (helical) occupy residues 389–411 (LLTL…PAFG), 415–432 (GLGN…VSSI), 453–472 (LGLI…DLLT), 482–504 (IFIV…GFHI), and 539–561 (WLGF…YFAM).

The protein belongs to the AAE transporter (TC 2.A.81) family.

Its subcellular location is the cell membrane. This is an uncharacterized protein from Bordetella bronchiseptica (strain ATCC BAA-588 / NCTC 13252 / RB50) (Alcaligenes bronchisepticus).